We begin with the raw amino-acid sequence, 113 residues long: Probable 4-amino-4-deoxy-L-arabinose-phosphoundecaprenol flippase subunit ArnE (113 aa).

3 consecutive transmembrane segments (helical) span residues 40-60 (FGWL…WLLV), 64-84 (LPLG…TLLA), and 92-112 (VDRH…LMQG).

It belongs to the ArnE family. In terms of assembly, heterodimer of ArnE and ArnF.

It is found in the cell inner membrane. It functions in the pathway bacterial outer membrane biogenesis; lipopolysaccharide biosynthesis. Translocates 4-amino-4-deoxy-L-arabinose-phosphoundecaprenol (alpha-L-Ara4N-phosphoundecaprenol) from the cytoplasmic to the periplasmic side of the inner membrane. This chain is Probable 4-amino-4-deoxy-L-arabinose-phosphoundecaprenol flippase subunit ArnE, found in Pectobacterium atrosepticum (strain SCRI 1043 / ATCC BAA-672) (Erwinia carotovora subsp. atroseptica).